A 303-amino-acid polypeptide reads, in one-letter code: N-acetyl-D-glucosamine kinase (303 aa).

Residues 4–11 (GFDIGGTK) and 133–140 (GVGGGLIF) contribute to the ATP site. Residues His157, Cys177, Cys179, and Cys184 each contribute to the Zn(2+) site.

It belongs to the ROK (NagC/XylR) family. NagK subfamily.

It catalyses the reaction N-acetyl-D-glucosamine + ATP = N-acetyl-D-glucosamine 6-phosphate + ADP + H(+). It functions in the pathway cell wall biogenesis; peptidoglycan recycling. In terms of biological role, catalyzes the phosphorylation of N-acetyl-D-glucosamine (GlcNAc) derived from cell-wall degradation, yielding GlcNAc-6-P. The protein is N-acetyl-D-glucosamine kinase of Escherichia coli O127:H6 (strain E2348/69 / EPEC).